We begin with the raw amino-acid sequence, 407 residues long: Imidazolonepropionase (407 aa).

2 residues coordinate Fe(3+): H68 and H70. 2 residues coordinate Zn(2+): H68 and H70. 4-imidazolone-5-propanoate contacts are provided by R77, Y140, and H173. Y140 serves as a coordination point for N-formimidoyl-L-glutamate. H238 provides a ligand contact to Fe(3+). H238 serves as a coordination point for Zn(2+). A 4-imidazolone-5-propanoate-binding site is contributed by Q241. D313 is a binding site for Fe(3+). D313 provides a ligand contact to Zn(2+). Residues N315 and G317 each coordinate N-formimidoyl-L-glutamate. T318 provides a ligand contact to 4-imidazolone-5-propanoate.

The protein belongs to the metallo-dependent hydrolases superfamily. HutI family. It depends on Zn(2+) as a cofactor. Fe(3+) is required as a cofactor.

The protein localises to the cytoplasm. The enzyme catalyses 4-imidazolone-5-propanoate + H2O = N-formimidoyl-L-glutamate. It participates in amino-acid degradation; L-histidine degradation into L-glutamate; N-formimidoyl-L-glutamate from L-histidine: step 3/3. In terms of biological role, catalyzes the hydrolytic cleavage of the carbon-nitrogen bond in imidazolone-5-propanoate to yield N-formimidoyl-L-glutamate. It is the third step in the universal histidine degradation pathway. The protein is Imidazolonepropionase of Burkholderia pseudomallei (strain 1710b).